We begin with the raw amino-acid sequence, 318 residues long: Dihydroorotate dehydrogenase B (NAD(+)), catalytic subunit (318 aa).

FMN is bound by residues serine 19 and 43-44 (KT). Residues lysine 43, 69–73 (NAMGL), and asparagine 125 contribute to the substrate site. Residue asparagine 125 participates in FMN binding. Cysteine 128 (nucleophile) is an active-site residue. Residues lysine 164 and valine 192 each coordinate FMN. A substrate-binding site is contributed by 193–194 (NT). Residues glycine 219, 247–248 (GG), and 269–270 (AT) each bind FMN.

Belongs to the dihydroorotate dehydrogenase family. Type 1 subfamily. In terms of assembly, heterotetramer of 2 PyrK and 2 PyrD type B subunits. It depends on FMN as a cofactor.

The protein localises to the cytoplasm. It carries out the reaction (S)-dihydroorotate + NAD(+) = orotate + NADH + H(+). The protein operates within pyrimidine metabolism; UMP biosynthesis via de novo pathway; orotate from (S)-dihydroorotate (NAD(+) route): step 1/1. Catalyzes the conversion of dihydroorotate to orotate with NAD(+) as electron acceptor. This is Dihydroorotate dehydrogenase B (NAD(+)), catalytic subunit (pyrD) from Methanopyrus kandleri (strain AV19 / DSM 6324 / JCM 9639 / NBRC 100938).